We begin with the raw amino-acid sequence, 673 residues long: UvrABC system protein B (673 aa).

The 160-residue stretch at 29–188 folds into the Helicase ATP-binding domain; it reads EGLNDGLAHQ…LAELQYTRND (160 aa). 42–49 provides a ligand contact to ATP; it reads GVTGSGKT. Residues 95 to 118 carry the Beta-hairpin motif; the sequence is YYDYYQPEAYVPSSDTFIEKDASI. The Helicase C-terminal domain maps to 434 to 600; the sequence is QVDDVLSEIH…ALNKKVGELL (167 aa). Positions 607–632 are disordered; sequence KPKRGKQAVKVEEKSANTYKPKSRKE. A UVR domain is found at 634–669; the sequence is EKELKQLEQQMRDFAKDLEFEKAAAVRDKIGQLKAV.

The protein belongs to the UvrB family. As to quaternary structure, forms a heterotetramer with UvrA during the search for lesions. Interacts with UvrC in an incision complex.

It localises to the cytoplasm. Its function is as follows. The UvrABC repair system catalyzes the recognition and processing of DNA lesions. A damage recognition complex composed of 2 UvrA and 2 UvrB subunits scans DNA for abnormalities. Upon binding of the UvrA(2)B(2) complex to a putative damaged site, the DNA wraps around one UvrB monomer. DNA wrap is dependent on ATP binding by UvrB and probably causes local melting of the DNA helix, facilitating insertion of UvrB beta-hairpin between the DNA strands. Then UvrB probes one DNA strand for the presence of a lesion. If a lesion is found the UvrA subunits dissociate and the UvrB-DNA preincision complex is formed. This complex is subsequently bound by UvrC and the second UvrB is released. If no lesion is found, the DNA wraps around the other UvrB subunit that will check the other stand for damage. This Actinobacillus pleuropneumoniae serotype 5b (strain L20) protein is UvrABC system protein B.